The chain runs to 411 residues: Methyl-CpG-binding domain protein 2 (411 aa).

Positions 1 to 149 (MRAHPGGGRC…GPRATESGKR (149 aa)) are required for interaction with DHX9 and PRMT5. The disordered stretch occupies residues 1–158 (MRAHPGGGRC…RMDCPALPPG (158 aa)). The span at 77 to 95 (GRGRGRGRGRGRGRGRGRG) shows a compositional bias: basic residues. Positions 98-121 (PSGGSGLGGDGGGCGGGGSGGGGA) are enriched in gly residues. The region spanning 145–213 (ESGKRMDCPA…SSFDFRTGKM (69 aa)) is the MBD domain. At Ser181 the chain carries Phosphoserine. The segment at 214 to 241 (MPSKLQKNKQRLRNDPLNQNKGKPDLNT) is disordered. Over residues 229 to 241 (PLNQNKGKPDLNT) the composition is skewed to polar residues. The residue at position 407 (Ser407) is a Phosphoserine.

As to quaternary structure, heterodimer with MBD3 (via N-terminus). Component of the MeCP1 complex that contains HDAC1 and HDAC2. Component of the nucleosome remodeling and deacetylase (NuRD) repressor complex, composed of core proteins MTA1, MTA2, MTA3, RBBP4, RBBP7, HDAC1, HDAC2, MBD2, MBD3, and peripherally associated proteins CDK2AP1, CDK2AP2, GATAD2A, GATAD2B, CHD3, CHD4 and CHD5. The exact stoichiometry of the NuRD complex is unknown, and some subunits such as MBD2 and MBD3, GATAD2A and GATAD2B, and CHD3, CHD4 and CHD5 define mutually exclusive NuRD complexes. Interacts with CDK2AP1. Interacts with DHX9. Interacts with DNMT1. Interacts with GATAD2A/p66-alpha. Interacts with GATAD2B/p66-beta. Interacts with GPN1. Interacts with MIZF. Interacts with PRMT5. Interacts with SIN3A. Interacts with SPHK2. In terms of tissue distribution, highly expressed in brain, heart, kidney, stomach, testis and placenta.

The protein localises to the nucleus. Its subcellular location is the chromosome. Functionally, binds CpG islands in promoters where the DNA is methylated at position 5 of cytosine within CpG dinucleotides. Binds hemimethylated DNA as well. Recruits histone deacetylases and DNA methyltransferases to chromatin. Acts as a component of the histone deacetylase NuRD complex which participates in the remodeling of chromatin. Acts as a transcriptional repressor and plays a role in gene silencing. Functions as a scaffold protein, targeting GATAD2A and GATAD2B to chromatin to promote repression. May enhance the activation of some unmethylated cAMP-responsive promoters. This chain is Methyl-CpG-binding domain protein 2, found in Homo sapiens (Human).